A 446-amino-acid polypeptide reads, in one-letter code: Methionine aminopeptidase 2 (446 aa).

Positions 1 to 85 are disordered; it reads MAGVTEGEDT…KNKKKKKKKI (85 aa). A compositionally biased stretch (basic and acidic residues) spans 8 to 32; that stretch reads EDTKVIESKINELNIDKPKLEDNNE. A compositionally biased stretch (acidic residues) spans 42–58; sequence SGDDDDDDKEEDDDNEI. Residues 73–85 are compositionally biased toward basic residues; it reads KKNKNKKKKKKKI. H197 serves as a coordination point for substrate. D217, D228, and H299 together coordinate a divalent metal cation. H307 is a substrate binding site. Residues E332 and E427 each contribute to the a divalent metal cation site.

It belongs to the peptidase M24A family. Methionine aminopeptidase eukaryotic type 2 subfamily. It depends on Co(2+) as a cofactor. Zn(2+) is required as a cofactor. Mn(2+) serves as cofactor. Requires Fe(2+) as cofactor.

It is found in the cytoplasm. It catalyses the reaction Release of N-terminal amino acids, preferentially methionine, from peptides and arylamides.. Cotranslationally removes the N-terminal methionine from nascent proteins. The N-terminal methionine is often cleaved when the second residue in the primary sequence is small and uncharged (Met-Ala-, Cys, Gly, Pro, Ser, Thr, or Val). The chain is Methionine aminopeptidase 2 from Candida albicans (strain SC5314 / ATCC MYA-2876) (Yeast).